Here is a 64-residue protein sequence, read N- to C-terminus: Fatty acid-binding protein (64 aa).

The protein belongs to the calycin superfamily. Fatty-acid binding protein (FABP) family.

It is found in the cytoplasm. Functionally, FABPs are thought to play a role in the intracellular transport of long-chain fatty acids and their acyl-CoA esters. In Acarus siro (Flour mite), this protein is Fatty acid-binding protein.